Consider the following 149-residue polypeptide: Nucleoside diphosphate kinase (149 aa).

Positions 9, 57, 85, 91, 102, and 112 each coordinate ATP. The Pros-phosphohistidine intermediate role is filled by histidine 115.

It belongs to the NDK family. Requires Mg(2+) as cofactor.

It is found in the cytoplasm. It carries out the reaction a 2'-deoxyribonucleoside 5'-diphosphate + ATP = a 2'-deoxyribonucleoside 5'-triphosphate + ADP. The catalysed reaction is a ribonucleoside 5'-diphosphate + ATP = a ribonucleoside 5'-triphosphate + ADP. Its function is as follows. Major role in the synthesis of nucleoside triphosphates other than ATP. The ATP gamma phosphate is transferred to the NDP beta phosphate via a ping-pong mechanism, using a phosphorylated active-site intermediate. In Methanoculleus marisnigri (strain ATCC 35101 / DSM 1498 / JR1), this protein is Nucleoside diphosphate kinase.